The following is a 239-amino-acid chain: Ribosomal RNA small subunit methyltransferase G (239 aa).

Residues Gly95, Leu100, 118–120 (EAT), 146–147 (AE), and Arg164 each bind S-adenosyl-L-methionine.

Belongs to the methyltransferase superfamily. RNA methyltransferase RsmG family.

It localises to the cytoplasm. It carries out the reaction guanosine(527) in 16S rRNA + S-adenosyl-L-methionine = N(7)-methylguanosine(527) in 16S rRNA + S-adenosyl-L-homocysteine. Specifically methylates the N7 position of guanine in position 527 of 16S rRNA. The sequence is that of Ribosomal RNA small subunit methyltransferase G from Sorangium cellulosum (strain So ce56) (Polyangium cellulosum (strain So ce56)).